Reading from the N-terminus, the 347-residue chain is Dihydroorotase (347 aa).

His13 and His15 together coordinate Zn(2+). Substrate is bound by residues 15-17 (HLR) and Asn41. Lys99, His136, and His174 together coordinate Zn(2+). Lys99 carries the post-translational modification N6-carboxylysine. Residue His136 participates in substrate binding. Leu219 lines the substrate pocket. Residue Asp247 coordinates Zn(2+). Asp247 is an active-site residue. Substrate is bound by residues His251 and Ala263.

It belongs to the metallo-dependent hydrolases superfamily. DHOase family. Class II DHOase subfamily. In terms of assembly, homodimer. Requires Zn(2+) as cofactor.

The enzyme catalyses (S)-dihydroorotate + H2O = N-carbamoyl-L-aspartate + H(+). The protein operates within pyrimidine metabolism; UMP biosynthesis via de novo pathway; (S)-dihydroorotate from bicarbonate: step 3/3. Its function is as follows. Catalyzes the reversible cyclization of carbamoyl aspartate to dihydroorotate. The chain is Dihydroorotase from Sinorhizobium medicae (strain WSM419) (Ensifer medicae).